A 457-amino-acid polypeptide reads, in one-letter code: ATP synthase subunit beta (457 aa).

Residue 147–154 (GGAGVGKT) participates in ATP binding.

It belongs to the ATPase alpha/beta chains family. In terms of assembly, F-type ATPases have 2 components, CF(1) - the catalytic core - and CF(0) - the membrane proton channel. CF(1) has five subunits: alpha(3), beta(3), gamma(1), delta(1), epsilon(1). CF(0) has three main subunits: a(1), b(2) and c(9-12). The alpha and beta chains form an alternating ring which encloses part of the gamma chain. CF(1) is attached to CF(0) by a central stalk formed by the gamma and epsilon chains, while a peripheral stalk is formed by the delta and b chains.

It is found in the cell inner membrane. It carries out the reaction ATP + H2O + 4 H(+)(in) = ADP + phosphate + 5 H(+)(out). In terms of biological role, produces ATP from ADP in the presence of a proton gradient across the membrane. The catalytic sites are hosted primarily by the beta subunits. The chain is ATP synthase subunit beta from Haemophilus ducreyi (strain 35000HP / ATCC 700724).